The primary structure comprises 1007 residues: MTSPVQWGTFFHQCLLHRIDANEFRNLSKLLLQKCPIAETALLDALLQTRSESRIKWDPLLPLYIDCLCRTGRVRTSTVLTSLLKYSSIHDKPQLSTSEGKDGSKCYTLMTDIRVIQDTMLSVSTGSTPKTNAEAVAIFFAIIDWIHAVASWHNSHFDPGQHSSGIMSSPDVVSLFESLGILLAALSGTGKGLEVLSADSHEGLKVKLGQALSAYLPLCVEVSLPLRNRLDGLQKEFNLYGERVPKSLDVPMMENMNVNALQFEASVMDGPVINSRAGLYVFINAMLVGRPLVDDGMLINYLANRYGGHYEALVEEILTASFDVLSNGMYRNESSRMMFVFRSFLVNKLPPFFAAMLASTMVSIPMEMCISHALSRLDPNTFPSFSQMFEMQGNTVLSDVRQEFLFACASHKLIPESSIERLLGENPMQTLPVGYNKDELVSQINANPERAEQLINEIESMEGNAGAIIGAITEVMHNLCNQKETMTLKNICNSLSRRPQALDVVLIFRNPKQVLQPLCALLDSWHWDEDQGEYQPVYDEFGSILLLVLAFKYRFDLRPADLGISSSDSFVLRLLERGSCSQKLDALDEKQNKNLGSWIAALFIAEGISEETMSACSPQEFYLLVATLFSQSLEACETGKLEFDTLKGGFEYLLEPFLLPSLIFALTWLGDHIWEMELDPSIPLKVLHSLVNPSSISGEAREIHRTVLNIAARTLEEQLKDVRTRHPSRTDIKPILDSLEPCLSFQLVGSSHRSELEGWTTHSSGGLLGSIRSTFQSLVLWSTNPEVSMAPPPYTHRQLIAGVRMLGASRVLPALIEELKLQTEAGNGPLALDLAATLICAPMAETFSVEQNSHQPVDPNKEALPRCGILTLRDVLALQHENVPKISEKDPLRAEVLVRLYRRVNALLAPPSQVPNLDVNNIIQNMQLGGVGVGAGQMELDATGAADHGVGPDDAENIHRMIDNAAAAAGLDSSGTGLDTSIDDVLNAADMAVGNPEFLDLDMEGMF.

The protein belongs to the Mediator complex subunit 5 family. In terms of assembly, component of the Mediator complex.

The protein localises to the nucleus. In terms of biological role, component of the Mediator complex, a coactivator involved in the regulated transcription of nearly all RNA polymerase II-dependent genes. Mediator functions as a bridge to convey information from gene-specific regulatory proteins to the basal RNA polymerase II transcription machinery. Mediator is recruited to promoters by direct interactions with regulatory proteins and serves as a scaffold for the assembly of a functional preinitiation complex with RNA polymerase II and the general transcription factors. The chain is Mediator of RNA polymerase II transcription subunit 5 (nut1) from Aspergillus fumigatus (strain ATCC MYA-4609 / CBS 101355 / FGSC A1100 / Af293) (Neosartorya fumigata).